We begin with the raw amino-acid sequence, 559 residues long: Urocanate hydratase (559 aa).

NAD(+) is bound by residues 54 to 55, glutamine 132, 178 to 180, glutamate 198, arginine 203, 244 to 245, 265 to 269, 275 to 276, and tyrosine 324; these read GG, GMG, NA, QTSAH, and YL. Cysteine 412 is a catalytic residue. Glycine 494 serves as a coordination point for NAD(+).

This sequence belongs to the urocanase family. Requires NAD(+) as cofactor.

It localises to the cytoplasm. The catalysed reaction is 4-imidazolone-5-propanoate = trans-urocanate + H2O. It functions in the pathway amino-acid degradation; L-histidine degradation into L-glutamate; N-formimidoyl-L-glutamate from L-histidine: step 2/3. Functionally, catalyzes the conversion of urocanate to 4-imidazolone-5-propionate. This chain is Urocanate hydratase, found in Azotobacter vinelandii (strain DJ / ATCC BAA-1303).